Consider the following 65-residue polypeptide: uncharacterized protein (65 aa).

This is an uncharacterized protein from Bacillus subtilis (strain 168).